The following is a 245-amino-acid chain: uncharacterized protein (245 aa).

Transmembrane regions (helical) follow at residues 29–51 and 61–83; these read LVVL…RIGM and TILF…LMLH.

The protein resides in the cell membrane. This is an uncharacterized protein from Treponema pallidum (strain Nichols).